The sequence spans 320 residues: Peptidase 1 (320 aa).

An N-terminal signal peptide occupies residues Met-1–Ala-18. Residues Arg-19–Glu-98 constitute a propeptide, activation peptide. Cystine bridges form between Cys-102–Cys-215, Cys-129–Cys-169, and Cys-163–Cys-201. Cys-132 is a catalytic residue. Residue Asn-150 is glycosylated (N-linked (GlcNAc...) asparagine). Active-site residues include His-268 and Asn-288.

This sequence belongs to the peptidase C1 family. In terms of processing, N-glycosylated. N-glycanase treatment does not completely remove carbohydrates, suggesting that the protein contains additional glycosylation sites.

The protein localises to the secreted. It carries out the reaction Broad endopeptidase specificity.. Its function is as follows. Thiol protease, with a preference for substrates with a large hydrophobic side chain in the P2 position, or with basic residues. The polypeptide is Peptidase 1 (DERP1) (Dermatophagoides pteronyssinus (European house dust mite)).